Here is a 152-residue protein sequence, read N- to C-terminus: Xanthine-guanine phosphoribosyltransferase (152 aa).

5-phospho-alpha-D-ribose 1-diphosphate is bound by residues 37–38 (RG), Arg69, and 88–96 (DDLVDTGGT). GMP is bound at residue Arg69. Asp89 provides a ligand contact to Mg(2+). Residues Asp92 and Ile135 each contribute to the guanine site. Positions 92 and 135 each coordinate xanthine. GMP contacts are provided by residues 92–96 (DTGGT) and 134–135 (WI).

Belongs to the purine/pyrimidine phosphoribosyltransferase family. XGPT subfamily. In terms of assembly, homotetramer. It depends on Mg(2+) as a cofactor.

Its subcellular location is the cell inner membrane. It catalyses the reaction GMP + diphosphate = guanine + 5-phospho-alpha-D-ribose 1-diphosphate. The catalysed reaction is XMP + diphosphate = xanthine + 5-phospho-alpha-D-ribose 1-diphosphate. It carries out the reaction IMP + diphosphate = hypoxanthine + 5-phospho-alpha-D-ribose 1-diphosphate. The protein operates within purine metabolism; GMP biosynthesis via salvage pathway; GMP from guanine: step 1/1. It participates in purine metabolism; XMP biosynthesis via salvage pathway; XMP from xanthine: step 1/1. Functionally, purine salvage pathway enzyme that catalyzes the transfer of the ribosyl-5-phosphate group from 5-phospho-alpha-D-ribose 1-diphosphate (PRPP) to the N9 position of the 6-oxopurines guanine and xanthine to form the corresponding ribonucleotides GMP (guanosine 5'-monophosphate) and XMP (xanthosine 5'-monophosphate), with the release of PPi. To a lesser extent, also acts on hypoxanthine. This chain is Xanthine-guanine phosphoribosyltransferase, found in Salmonella choleraesuis (strain SC-B67).